Reading from the N-terminus, the 426-residue chain is Probable histidine--tRNA ligase (426 aa).

Belongs to the class-II aminoacyl-tRNA synthetase family. Homodimer.

The protein resides in the cytoplasm. It catalyses the reaction tRNA(His) + L-histidine + ATP = L-histidyl-tRNA(His) + AMP + diphosphate + H(+). The protein is Probable histidine--tRNA ligase (hisS) of Tropheryma whipplei (strain TW08/27) (Whipple's bacillus).